Consider the following 331-residue polypeptide: Pantothenate kinase (331 aa).

109–116 (GSVAVGKS) is an ATP binding site.

The protein belongs to the prokaryotic pantothenate kinase family.

The protein localises to the cytoplasm. The enzyme catalyses (R)-pantothenate + ATP = (R)-4'-phosphopantothenate + ADP + H(+). The protein operates within cofactor biosynthesis; coenzyme A biosynthesis; CoA from (R)-pantothenate: step 1/5. The protein is Pantothenate kinase of Sinorhizobium medicae (strain WSM419) (Ensifer medicae).